Reading from the N-terminus, the 67-residue chain is MPKLKTRKAAAKRFRATGSGNKIFRRKAYKNHLLYHKSAERKRRRLSGLALVSEEDIKEVRLMLPYL.

The protein belongs to the bacterial ribosomal protein bL35 family.

The protein is Large ribosomal subunit protein bL35 of Gloeothece citriformis (strain PCC 7424) (Cyanothece sp. (strain PCC 7424)).